We begin with the raw amino-acid sequence, 393 residues long: Digeranylgeranylglycerophospholipid reductase (393 aa).

Positions 14, 33, 44, 45, 47, 100, 124, 280, 292, and 293 each coordinate FAD.

It belongs to the geranylgeranyl reductase family. DGGGPL reductase subfamily. It depends on FAD as a cofactor.

The enzyme catalyses a 2,3-bis-O-phytanyl-sn-glycerol 1-phospholipid + 8 A = a 2,3-bis-O-(geranylgeranyl)-sn-glycerol 1-phospholipid + 8 AH2. It catalyses the reaction 2,3-bis-O-(phytanyl)-sn-glycerol 1-phosphate + 8 A = 2,3-bis-O-(geranylgeranyl)-sn-glycerol 1-phosphate + 8 AH2. The catalysed reaction is CDP-2,3-bis-O-(geranylgeranyl)-sn-glycerol + 8 AH2 = CDP-2,3-bis-O-(phytanyl)-sn-glycerol + 8 A. It carries out the reaction archaetidylserine + 8 AH2 = 2,3-bis-O-phytanyl-sn-glycero-3-phospho-L-serine + 8 A. The protein operates within membrane lipid metabolism; glycerophospholipid metabolism. In terms of biological role, is involved in the reduction of 2,3-digeranylgeranylglycerophospholipids (unsaturated archaeols) into 2,3-diphytanylglycerophospholipids (saturated archaeols) in the biosynthesis of archaeal membrane lipids. Catalyzes the formation of archaetidic acid (2,3-di-O-phytanyl-sn-glyceryl phosphate) from 2,3-di-O-geranylgeranylglyceryl phosphate (DGGGP) via the hydrogenation of each double bond of the isoprenoid chains. Is also probably able to reduce double bonds of geranyl groups in CDP-2,3-bis-O-(geranylgeranyl)-sn-glycerol and archaetidylserine, thus acting at various stages in the biosynthesis of archaeal membrane lipids. The sequence is that of Digeranylgeranylglycerophospholipid reductase from Methanobrevibacter smithii (strain ATCC 35061 / DSM 861 / OCM 144 / PS).